An 853-amino-acid polypeptide reads, in one-letter code: DNA mismatch repair protein MutS (853 aa).

Residue glycine 613–serine 620 participates in ATP binding.

It belongs to the DNA mismatch repair MutS family.

This protein is involved in the repair of mismatches in DNA. It is possible that it carries out the mismatch recognition step. This protein has a weak ATPase activity. This chain is DNA mismatch repair protein MutS, found in Vibrio campbellii (strain ATCC BAA-1116).